A 433-amino-acid chain; its full sequence is Xylose isomerase (433 aa).

Residues histidine 97 and aspartate 100 contribute to the active site. Positions 228, 264, 267, 292, 303, 305, and 334 each coordinate Mg(2+).

This sequence belongs to the xylose isomerase family. Homotetramer. Requires Mg(2+) as cofactor.

The protein localises to the cytoplasm. It carries out the reaction alpha-D-xylose = alpha-D-xylulofuranose. This chain is Xylose isomerase, found in Fervidobacterium gondwanense.